Here is a 274-residue protein sequence, read N- to C-terminus: NH(3)-dependent NAD(+) synthetase (274 aa).

46–53 (GISGGQDS) contributes to the ATP binding site. Asp52 provides a ligand contact to Mg(2+). Arg140 contacts deamido-NAD(+). ATP is bound at residue Thr160. Residue Glu165 participates in Mg(2+) binding. Residues Lys173 and Asp180 each coordinate deamido-NAD(+). 2 residues coordinate ATP: Lys189 and Thr211. Residue 260–261 (HK) coordinates deamido-NAD(+).

It belongs to the NAD synthetase family. Homodimer.

The enzyme catalyses deamido-NAD(+) + NH4(+) + ATP = AMP + diphosphate + NAD(+) + H(+). Its pathway is cofactor biosynthesis; NAD(+) biosynthesis; NAD(+) from deamido-NAD(+) (ammonia route): step 1/1. Functionally, catalyzes the ATP-dependent amidation of deamido-NAD to form NAD. Uses ammonia as a nitrogen source. This chain is NH(3)-dependent NAD(+) synthetase, found in Nocardia farcinica (strain IFM 10152).